The primary structure comprises 1124 residues: tRNA (34-2'-O)-methyltransferase regulator WDR6 (1124 aa).

Methionine 1 is modified (N-acetylmethionine). WD repeat units follow at residues 53–97, 105–143, 147–189, 200–238, 247–285, 289–327, 335–376, 381–422, 425–470, 476–520, 557–596, 602–640, 643–682, 743–789, 852–897, 905–950, 974–1015, 1039–1076, and 1082–1124; these read MKRV…IVKI, RELW…LYDP, CSLQ…VWYP, VPDR…IWKV, RVQN…VWSH, ILQA…LWHL, SGVF…LYDL, WEQL…VVPI, PTAA…ISAA, IFVK…LYPS, PMST…FVRG, VLRQ…VWSP, HEKL…LYRA, LIDI…VWGV, RHRH…LFLL, QLLA…FWDL, GSPC…VFVL, EEYS…FWRL, and TFMN…NWYD.

This sequence belongs to the WD repeat WDR6 family. As to quaternary structure, interacts with FTSJ1; the interaction is direct, and required for 2'-O-methylation of position 34 in substrate tRNAs. Interacts with IRS4. Interacts with STK11/LKB1.

It localises to the cytoplasm. Functionally, together with methyltransferase FTSJ1, methylates the 2'-O-ribose of nucleotides at position 34 of the tRNA anticodon loop of substrate tRNAs. Required for the correct positioning of the substrate tRNA for methylation. Required to suppress amino acid starvation-induced autophagy. Enhances the STK11/LKB1-induced cell growth suppression activity. The chain is tRNA (34-2'-O)-methyltransferase regulator WDR6 (WDR6) from Bos taurus (Bovine).